The primary structure comprises 224 residues: Peptide deformylase 3 (224 aa).

Cys135 and His177 together coordinate Fe cation. The active site involves Glu178. A Fe cation-binding site is contributed by His181.

It belongs to the polypeptide deformylase family. Requires Fe(2+) as cofactor.

It carries out the reaction N-terminal N-formyl-L-methionyl-[peptide] + H2O = N-terminal L-methionyl-[peptide] + formate. Its function is as follows. Removes the formyl group from the N-terminal Met of newly synthesized proteins. Requires at least a dipeptide for an efficient rate of reaction. N-terminal L-methionine is a prerequisite for activity but the enzyme has broad specificity at other positions. In Streptomyces avermitilis (strain ATCC 31267 / DSM 46492 / JCM 5070 / NBRC 14893 / NCIMB 12804 / NRRL 8165 / MA-4680), this protein is Peptide deformylase 3.